A 278-amino-acid polypeptide reads, in one-letter code: Fasciclin-like arabinogalactan protein 5 (278 aa).

The signal sequence occupies residues 1–24 (MGLKASLSLLSLTILLVFSKVVTA). The region spanning 25–169 (NNITLAFQKY…LSIIQITMPI (145 aa)) is the FAS1 domain. N-linked (GlcNAc...) asparagine glycosylation is found at asparagine 26, asparagine 74, asparagine 126, and asparagine 159. Residues 199–257 (VVPAPGPAADDNSPDSAVPKTPPAPATDTPEADSPAPAPSADNEKIEAADKAKPSSSAS) form a disordered region. The segment covering 224-239 (ATDTPEADSPAPAPSA) has biased composition (low complexity). Basic and acidic residues predominate over residues 240-251 (DNEKIEAADKAK). A lipid anchor (GPI-anchor amidated serine) is attached at serine 255. Residues 256 to 278 (ASKAGWSFDVILLLAFLASFAGF) constitute a propeptide, removed in mature form.

Belongs to the fasciclin-like AGP family.

The protein resides in the cell membrane. In terms of biological role, may be a cell surface adhesion protein. In Arabidopsis thaliana (Mouse-ear cress), this protein is Fasciclin-like arabinogalactan protein 5 (FLA5).